The chain runs to 331 residues: Cytochrome bo(3) ubiquinol oxidase subunit 2 (331 aa).

The N-terminal stretch at 1-23 (MTKANPFAALKWLSLAPALLLGG) is a signal peptide. Cysteine 24 carries the N-palmitoyl cysteine lipid modification. Residue cysteine 24 is the site of S-diacylglycerol cysteine attachment. The Periplasmic segment spans residues 24-41 (CDMTLFNPKGQVGMDERT). The helical transmembrane segment at 42–62 (LIITATLLMLIVVIPVIVMTL) threads the bilayer. Topologically, residues 63 to 86 (AFAWKYRASNTQAEYKPDWHHSNR) are cytoplasmic. The helical transmembrane segment at 87–107 (IEAVVWLVPCVIIAILGWITW) threads the bilayer. The Periplasmic segment spans residues 108–331 (ESTHKLDPYR…DMHMQPSTQE (224 aa)).

This sequence belongs to the cytochrome c oxidase subunit 2 family. As to quaternary structure, heterooctamer of two A chains, two B chains, two C chains and two D chains.

It localises to the cell inner membrane. Functionally, cytochrome bo(3) ubiquinol terminal oxidase is the component of the aerobic respiratory chain of E.coli that predominates when cells are grown at high aeration. Has proton pump activity across the membrane in addition to electron transfer, pumping 2 protons/electron. In Pseudomonas aeruginosa (strain ATCC 15692 / DSM 22644 / CIP 104116 / JCM 14847 / LMG 12228 / 1C / PRS 101 / PAO1), this protein is Cytochrome bo(3) ubiquinol oxidase subunit 2 (cyoA).